Consider the following 405-residue polypeptide: Imidazolonepropionase (405 aa).

Fe(3+) contacts are provided by histidine 72 and histidine 74. Residues histidine 72 and histidine 74 each coordinate Zn(2+). 4-imidazolone-5-propanoate-binding residues include arginine 81, tyrosine 144, and histidine 177. Residue tyrosine 144 participates in N-formimidoyl-L-glutamate binding. Histidine 242 contacts Fe(3+). Histidine 242 serves as a coordination point for Zn(2+). Residue glutamine 245 participates in 4-imidazolone-5-propanoate binding. Aspartate 317 is a Fe(3+) binding site. Residue aspartate 317 coordinates Zn(2+). 2 residues coordinate N-formimidoyl-L-glutamate: asparagine 319 and glycine 321. Threonine 322 provides a ligand contact to 4-imidazolone-5-propanoate.

Belongs to the metallo-dependent hydrolases superfamily. HutI family. Zn(2+) serves as cofactor. It depends on Fe(3+) as a cofactor.

It is found in the cytoplasm. It catalyses the reaction 4-imidazolone-5-propanoate + H2O = N-formimidoyl-L-glutamate. Its pathway is amino-acid degradation; L-histidine degradation into L-glutamate; N-formimidoyl-L-glutamate from L-histidine: step 3/3. Catalyzes the hydrolytic cleavage of the carbon-nitrogen bond in imidazolone-5-propanoate to yield N-formimidoyl-L-glutamate. It is the third step in the universal histidine degradation pathway. This Klebsiella pneumoniae (strain 342) protein is Imidazolonepropionase.